A 254-amino-acid polypeptide reads, in one-letter code: Probable transcriptional regulator ycf27 (254 aa).

Residues 16-129 enclose the Response regulatory domain; that stretch reads KVLIVDDEAS…ELEARIRAVL (114 aa). Position 65 is a 4-aspartylphosphate (Asp65). Residues 85–103 constitute a DNA-binding region (H-T-H motif); sequence DVPIIMLTALGDVADRITG. A DNA-binding region (ompR/PhoB-type) is located at residues 144–245; sequence SGIINFNFLT…ARGTGYLFQR (102 aa).

It localises to the plastid. The protein resides in the chloroplast. Probable promoter-specific protein mediating the interaction between DNA and RNA polymerase. This is Probable transcriptional regulator ycf27 (ycf27) from Guillardia theta (Cryptophyte).